The sequence spans 709 residues: Elongation factor G (709 aa).

A tr-type G domain is found at 10–295; that stretch reads NQIRNIGIMA…AVVDYLPSPE (286 aa). Residues 19-26, 91-95, and 145-148 each bind GTP; these read AHIDAGKT, DTPGH, and NKMD.

It belongs to the TRAFAC class translation factor GTPase superfamily. Classic translation factor GTPase family. EF-G/EF-2 subfamily.

It localises to the cytoplasm. Catalyzes the GTP-dependent ribosomal translocation step during translation elongation. During this step, the ribosome changes from the pre-translocational (PRE) to the post-translocational (POST) state as the newly formed A-site-bound peptidyl-tRNA and P-site-bound deacylated tRNA move to the P and E sites, respectively. Catalyzes the coordinated movement of the two tRNA molecules, the mRNA and conformational changes in the ribosome. The sequence is that of Elongation factor G from Bifidobacterium adolescentis (strain ATCC 15703 / DSM 20083 / NCTC 11814 / E194a).